The sequence spans 176 residues: Small ribosomal subunit protein uS4 (176 aa).

Positions 103 to 165 (RRLQTIVYKK…PTSPYAKRRL (63 aa)) constitute an S4 RNA-binding domain.

The protein belongs to the universal ribosomal protein uS4 family. Part of the 30S ribosomal subunit. Contacts protein S5. The interaction surface between S4 and S5 is involved in control of translational fidelity.

Its function is as follows. One of the primary rRNA binding proteins, it binds directly to 16S rRNA where it nucleates assembly of the body of the 30S subunit. Functionally, with S5 and S12 plays an important role in translational accuracy. The polypeptide is Small ribosomal subunit protein uS4 (Hyperthermus butylicus (strain DSM 5456 / JCM 9403 / PLM1-5)).